Here is a 580-residue protein sequence, read N- to C-terminus: Netrin-3 (580 aa).

The N-terminal stretch at 1–27 (MPGWPWGLLLTAGTLFAALSPGPPAPA) is a signal peptide. One can recognise a Laminin N-terminal domain in the interval 36–254 (APRGCVPGLV…AATDLQVGGR (219 aa)). The tract at residues 62–83 (PATRACDASDPRRAHSPALLTS) is disordered. 15 disulfides stabilise this stretch: Cys92–Cys125, Cys255–Cys264, Cys257–Cys274, Cys276–Cys285, Cys288–Cys308, Cys311–Cys320, Cys313–Cys338, Cys341–Cys350, Cys353–Cys371, Cys374–Cys386, Cys376–Cys393, Cys395–Cys404, Cys407–Cys421, Cys441–Cys514, and Cys460–Cys577. Asn104 is a glycosylation site (N-linked (GlcNAc...) asparagine). 3 consecutive Laminin EGF-like domains span residues 255-308 (CKCN…SHAC), 311-371 (CSCN…RRAC), and 374-421 (CDCH…VAPC). N-linked (GlcNAc...) asparagine glycosylation occurs at Asn387. The NTR domain maps to 441–577 (CDSHCKPARG…LQRRERRGRC (137 aa)). The short motif at 500 to 502 (RGS) is the Cell attachment site; atypical element.

As to expression, spinal cord.

It is found in the secreted. It localises to the extracellular space. The protein localises to the extracellular matrix. In terms of biological role, netrins control guidance of CNS commissural axons and peripheral motor axons. The polypeptide is Netrin-3 (NTN3) (Homo sapiens (Human)).